Consider the following 721-residue polypeptide: Catalase-peroxidase (721 aa).

Positions 89 to 212 (WHSAGTYRTG…LAAVQMGLIY (124 aa)) form a cross-link, tryptophyl-tyrosyl-methioninium (Trp-Tyr) (with M-238). His90 acts as the Proton acceptor in catalysis. A cross-link (tryptophyl-tyrosyl-methioninium (Tyr-Met) (with W-89)) is located at residues 212–238 (YVNPEGPNGDPDPFAAAVDIRETFARM). His253 lines the heme b pocket.

It belongs to the peroxidase family. Peroxidase/catalase subfamily. As to quaternary structure, homodimer or homotetramer. It depends on heme b as a cofactor. In terms of processing, formation of the three residue Trp-Tyr-Met cross-link is important for the catalase, but not the peroxidase activity of the enzyme.

The catalysed reaction is H2O2 + AH2 = A + 2 H2O. It carries out the reaction 2 H2O2 = O2 + 2 H2O. Bifunctional enzyme with both catalase and broad-spectrum peroxidase activity. This chain is Catalase-peroxidase, found in Shewanella baltica (strain OS155 / ATCC BAA-1091).